The primary structure comprises 549 residues: Sorting nexin-33 (549 aa).

The region spanning 1–61 (MALKARALYS…PASYVEILRP (61 aa)) is the SH3 domain. Positions 66–83 (VQVDYSGHTQGYTDSPHQ) are enriched in polar residues. The disordered stretch occupies residues 66–137 (VQVDYSGHTQ…RPEYTHRPRP (72 aa)). The segment covering 86–101 (YDDDEEDDDDWDDWDD) has biased composition (acidic residues). The segment covering 110 to 119 (SGSNGVSRSQ) has biased composition (polar residues). Over residues 127 to 137 (PRPEYTHRPRP) the composition is skewed to basic and acidic residues. The PX domain maps to 205 to 315 (FSCSVEEPTK…HFLSCQDEKQ (111 aa)). One can recognise a BAR domain in the interval 346-549 (LQDVEERVDV…EKTLHMYDDL (204 aa)).

This sequence belongs to the sorting nexin family.

It localises to the cytoplasm. The protein resides in the cytosol. The protein localises to the membrane. Its subcellular location is the cytoplasmic vesicle membrane. Its function is as follows. Plays a role in the reorganization of the cytoskeleton, endocytosis and cellular vesicle trafficking, both during interphase and at the end of mitotic cell divisions. Required for efficient progress through mitosis and cytokinesis. Required for normal formation of the cleavage furrow at the end of mitosis. Modulates endocytosis of cell-surface proteins. Promotes membrane tubulation (in vitro). May promote the formation of macropinosomes. The sequence is that of Sorting nexin-33 (snx33) from Xenopus tropicalis (Western clawed frog).